The chain runs to 231 residues: 7-cyano-7-deazaguanine synthase (231 aa).

ATP is bound at residue 11 to 21; that stretch reads LSGGLDSATTM. Zn(2+) is bound by residues cysteine 195, cysteine 205, cysteine 208, and cysteine 211.

This sequence belongs to the QueC family. Zn(2+) serves as cofactor.

The catalysed reaction is 7-carboxy-7-deazaguanine + NH4(+) + ATP = 7-cyano-7-deazaguanine + ADP + phosphate + H2O + H(+). The protein operates within purine metabolism; 7-cyano-7-deazaguanine biosynthesis. Catalyzes the ATP-dependent conversion of 7-carboxy-7-deazaguanine (CDG) to 7-cyano-7-deazaguanine (preQ(0)). The polypeptide is 7-cyano-7-deazaguanine synthase (Syntrophus aciditrophicus (strain SB)).